A 206-amino-acid chain; its full sequence is Ribosomal RNA small subunit methyltransferase G (206 aa).

S-adenosyl-L-methionine-binding positions include Gly-74, Leu-79, 125 to 126, and Arg-140; that span reads VE.

Belongs to the methyltransferase superfamily. RNA methyltransferase RsmG family.

It is found in the cytoplasm. It carries out the reaction guanosine(527) in 16S rRNA + S-adenosyl-L-methionine = N(7)-methylguanosine(527) in 16S rRNA + S-adenosyl-L-homocysteine. Its function is as follows. Specifically methylates the N7 position of guanine in position 527 of 16S rRNA. The polypeptide is Ribosomal RNA small subunit methyltransferase G (Shewanella sp. (strain MR-4)).